A 417-amino-acid polypeptide reads, in one-letter code: Cysteate synthase (417 aa).

Lys104 bears the N6-(pyridoxal phosphate)lysine mark. Pyridoxal 5'-phosphate is bound by residues Asn131 and Thr371.

The protein belongs to the threonine synthase family. Cysteate synthase subfamily. Homotrimer. Pyridoxal 5'-phosphate is required as a cofactor.

It catalyses the reaction O-phospho-L-serine + sulfite + H(+) = L-cysteate + phosphate. It functions in the pathway cofactor biosynthesis; coenzyme M biosynthesis. Its function is as follows. Specifically catalyzes the beta-elimination of phosphate from L-phosphoserine and the beta-addition of sulfite to the dehydroalanine intermediate to produce L-cysteate. This is Cysteate synthase from Methanococcoides burtonii (strain DSM 6242 / NBRC 107633 / OCM 468 / ACE-M).